The sequence spans 115 residues: Class I hydrophobin C (115 aa).

The first 19 residues, 1 to 19, serve as a signal peptide directing secretion; that stretch reads MFSRVLVAALVALPVLVSA. Disulfide bonds link C36-C93, C43-C87, C44-C74, and C94-C108.

The protein belongs to the fungal hydrophobin family. In terms of assembly, self-assembles to form functional amyloid fibrils called rodlets. Self-assembly into fibrillar rodlets occurs spontaneously at hydrophobic:hydrophilic interfaces and the rodlets further associate laterally to form amphipathic monolayers.

Its subcellular location is the secreted. It localises to the cell wall. Its function is as follows. Aerial growth, conidiation, and dispersal of filamentous fungi in the environment rely upon a capability of their secreting small amphipathic proteins called hydrophobins (HPBs) with low sequence identity. Class I can self-assemble into an outermost layer of rodlet bundles on aerial cell surfaces, conferring cellular hydrophobicity that supports fungal growth, development and dispersal; whereas Class II form highly ordered films at water-air interfaces through intermolecular interactions but contribute nothing to the rodlet structure. The polypeptide is Class I hydrophobin C (Agaricus bisporus (White button mushroom)).